A 138-amino-acid polypeptide reads, in one-letter code: Small ribosomal subunit protein uS12m (138 aa).

A mitochondrion-targeting transit peptide spans 1-29 (MSWSGLLHGLNTSLTCGPALVPRLWATCS). The tract at residues 36–56 (MHRLGPPKRPPRKLGPTEGRP) is disordered.

Belongs to the universal ribosomal protein uS12 family. Component of the mitochondrial small ribosomal subunit (mt-SSU). Mature mammalian 55S mitochondrial ribosomes consist of a small (28S) and a large (39S) subunit. The 28S small subunit contains a 12S ribosomal RNA (12S mt-rRNA) and 30 different proteins. The 39S large subunit contains a 16S rRNA (16S mt-rRNA), a copy of mitochondrial valine transfer RNA (mt-tRNA(Val)), which plays an integral structural role, and 52 different proteins.

It localises to the mitochondrion. This chain is Small ribosomal subunit protein uS12m (MRPS12), found in Homo sapiens (Human).